Consider the following 506-residue polypeptide: Zinc finger and SCAN domain containing protein 4D (506 aa).

Residues 37-119 enclose the SCAN box domain; it reads SAQLNFSPSN…RFMESLTDEC (83 aa). Positions 238–264 are disordered; that stretch reads SQGNSSHHVDFRSAPTPADVPMEEQPK. 4 consecutive C2H2-type zinc fingers follow at residues 395-417, 424-446, 452-474, and 480-503; these read FKCEECSRMFKHARSLSSHQRTH, LLCVTCQKMFKRVSDRRTHEIIH, FKCSTCEKSFSHKTNLKSHEMIH, and YVCSLCSRRFRQSSTYHRHLRNYH.

In terms of tissue distribution, highly expressed at the 2-cell stage but its expression is rapidly turned off.

The protein resides in the nucleus. The protein localises to the chromosome. It localises to the telomere. In terms of biological role, transcription factor required to regulate early development. Binds telomeres and plays a key role in genomic stability by regulating telomere elongation. Acts as an activator of spontaneous telomere sister chromatid exchange (T-SCE) and telomere elongation. This chain is Zinc finger and SCAN domain containing protein 4D (Zscan4d), found in Mus musculus (Mouse).